A 565-amino-acid chain; its full sequence is Perivitellin-2 67 kDa subunit (565 aa).

The N-terminal stretch at 1–26 (MSQLRWWVVSQVLLLIAICSLDHSEG) is a signal peptide. One can recognise an MACPF domain in the interval 27–340 (ARVCPKIVPG…AKVANLDRLT (314 aa)). The interval 387-565 (VPAWFSDRTT…CGMSWALIAK (179 aa)) is invertebrate MACPF Accessory Domain (IMAD).

In terms of assembly, perivitellin-2 is a dimer of heterodimers held together head-to-tail by non-covalent forces. The heterodimer is composed of the tachylectin subunit (31 kDa) and the MACPF subunit (67 kDa) that are disulfide-linked. Post-translationally, PV2 is a very high density lipoprotein (VHDL). It contains 3.75% of lipids. The major lipid classes are free sterols and phospholipids and also have significant quantities of energy-providing triacylglycerides and free fatty acids. As to expression, produced by albumen secretory cells. Found in developing eggs.

The protein resides in the secreted. Its subcellular location is the target cell membrane. In terms of biological role, the egg defensive protein perivitellin-2 is a pore-forming two-subunit glycoprotein that affects both the nervous and digestive systems of mammals. In addition, it is a source of both structural and energetic molecules during embryonic development. The tachylectin subunit (31 kDa) binds target membranes while the MACPF subunit (67 kDa) disrupts lipid bilayers forming large pores (inner diameter of about 5.6 nm) altering the plasma membrance conductance. Both in vivo and in vitro, the protein shows wide pH range stability and is resistant to enzymatic proteolysis from gastrointestinal environments. It is cytotoxic to both epithelial and immune cells from the digestive system of mammals. It induces enterocyte death by a lytic mechanism and disrupts enterocyte monolayers in a dose-dependent manner. After oral administration to mice, it binds enterocytes and induces large dose-dependent morphological changes on their small intestine mucosa, reducing the absorptive surface. Additionally, it is detected in the Peyer's patches where it activates lymphoid follicles and triggers apoptosis. The toxin can also traverse the intestinal barrier and induce oral adaptive immunity with evidence of circulating antibody response. The toxin also shows hemagglutination properties thanks to the tachylectin subunit, but has no hemolytic activity. In addition to enterotoxin activity, the toxin also acts as a neurotoxin, since an intraperitoneal injection can induce paralysis of the mice rear limbs, followed by death. This chain is Perivitellin-2 67 kDa subunit, found in Pomacea maculata (Giant applesnail).